The following is a 180-amino-acid chain: MGLSISKLFQSLFGKREMRILMVGLDAAGKTTILYKLKLGEIVTTIPTIGFNVETVEYRNISFTVWDVGGQDKIRPLWRHYFQNTQGIIFVVDSNDRERISEAHEELQRMLNEDELRDALLLVFANKQDLPNAMNAAEITDKLGLHSLRHRQWYIQATCATSGDGLYEGLEWLSTNLKNQ.

The N-myristoyl glycine moiety is linked to residue Gly-2. GTP-binding positions include 24-31 (GLDAAGKT), 67-71 (DVGGQ), and 126-129 (NKQD).

Belongs to the small GTPase superfamily. Arf family.

It localises to the golgi apparatus. The enzyme catalyses GTP + H2O = GDP + phosphate + H(+). Functionally, GTP-binding protein involved in protein trafficking; may modulate vesicle budding and uncoating within the Golgi apparatus. The chain is ADP-ribosylation factor 1 (arf1) from Schizosaccharomyces pombe (strain 972 / ATCC 24843) (Fission yeast).